The chain runs to 150 residues: UPF0178 protein AHA_0543 (150 aa).

This sequence belongs to the UPF0178 family.

The polypeptide is UPF0178 protein AHA_0543 (Aeromonas hydrophila subsp. hydrophila (strain ATCC 7966 / DSM 30187 / BCRC 13018 / CCUG 14551 / JCM 1027 / KCTC 2358 / NCIMB 9240 / NCTC 8049)).